The sequence spans 292 residues: Release factor glutamine methyltransferase (292 aa).

S-adenosyl-L-methionine is bound by residues 126 to 130 (GTGTG), Asp157, Trp184, and Asn198. 198–201 (NPPY) lines the substrate pocket.

It belongs to the protein N5-glutamine methyltransferase family. PrmC subfamily.

It carries out the reaction L-glutaminyl-[peptide chain release factor] + S-adenosyl-L-methionine = N(5)-methyl-L-glutaminyl-[peptide chain release factor] + S-adenosyl-L-homocysteine + H(+). In terms of biological role, methylates the class 1 translation termination release factors RF1/PrfA and RF2/PrfB on the glutamine residue of the universally conserved GGQ motif. This chain is Release factor glutamine methyltransferase, found in Haemophilus influenzae (strain ATCC 51907 / DSM 11121 / KW20 / Rd).